Here is a 639-residue protein sequence, read N- to C-terminus: tRNA 5-methylaminomethyl-2-thiouridine biosynthesis bifunctional protein MnmC (639 aa).

The tract at residues 1 to 228 (MSEPIEWLED…KRDNLQATYA (228 aa)) is tRNA (mnm(5)s(2)U34)-methyltransferase. Residues 254-639 (VGAGLAGAAV…SERWLGYEPQ (386 aa)) form an FAD-dependent cmnm(5)s(2)U34 oxidoreductase region.

This sequence in the N-terminal section; belongs to the methyltransferase superfamily. tRNA (mnm(5)s(2)U34)-methyltransferase family. It in the C-terminal section; belongs to the DAO family. The cofactor is FAD.

It localises to the cytoplasm. The catalysed reaction is 5-aminomethyl-2-thiouridine(34) in tRNA + S-adenosyl-L-methionine = 5-methylaminomethyl-2-thiouridine(34) in tRNA + S-adenosyl-L-homocysteine + H(+). Functionally, catalyzes the last two steps in the biosynthesis of 5-methylaminomethyl-2-thiouridine (mnm(5)s(2)U) at the wobble position (U34) in tRNA. Catalyzes the FAD-dependent demodification of cmnm(5)s(2)U34 to nm(5)s(2)U34, followed by the transfer of a methyl group from S-adenosyl-L-methionine to nm(5)s(2)U34, to form mnm(5)s(2)U34. The sequence is that of tRNA 5-methylaminomethyl-2-thiouridine biosynthesis bifunctional protein MnmC from Acidovorax sp. (strain JS42).